Reading from the N-terminus, the 657-residue chain is C4-dicarboxylate transport sensor protein DctS (657 aa).

Topologically, residues 1-26 are cytoplasmic; that stretch reads MRDTTGGPAGAEVWTVPGLLGARKLD. A helical membrane pass occupies residues 27 to 51; sequence LLALIPLVAIVALMTLVGALLFAVA. Over 52 to 252 the chain is Periplasmic; that stretch reads QSDANRARAK…AYDAPDAFGN (201 aa). A helical membrane pass occupies residues 253 to 273; the sequence is AALLAAIGALSVFAVLAMVVL. The Cytoplasmic segment spans residues 274–657; that stretch reads HRNALRRRMA…LPVPQEGAPA (384 aa). Residues 289–361 enclose the PAS domain; that stretch reads AEMAFRRAME…ARQRQLIEGQ (73 aa). One can recognise a PAC domain in the interval 365-417; sequence QAFETRFRRSDGSEIEVQVFEAPLIDAGGRHRGWMGSVIDITQAKQAARLARA. The inter-domain linker stretch occupies residues 407 to 422; sequence QAKQAARLARAQDESL. Residues 437-652 form the Histidine kinase domain; sequence TLAHELNQPL…VFTVTLPVPQ (216 aa). Position 440 is a phosphohistidine; by autocatalysis (His440).

The protein localises to the cell inner membrane. The catalysed reaction is ATP + protein L-histidine = ADP + protein N-phospho-L-histidine.. Its function is as follows. Member of the two-component regulatory system DctS/DctR involved in the transport of C4-dicarboxylates. DctS functions as a membrane-associated protein kinase that phosphorylates DctR in response to environmental signals. This is C4-dicarboxylate transport sensor protein DctS (dctS) from Rhodobacter capsulatus (Rhodopseudomonas capsulata).